A 331-amino-acid polypeptide reads, in one-letter code: Induced myeloid leukemia cell differentiation protein Mcl-1 homolog (331 aa).

The tract at residues 85–156 (LAVPPEEMAA…PPEEEEDDLY (72 aa)) is PEST-like. Ser-102 carries the phosphoserine modification. Residue Lys-117 forms a Glycyl lysine isopeptide (Lys-Gly) (interchain with G-Cter in ubiquitin) linkage. A disordered region spans residues 130–154 (EAAKSSGADGSLPSTPPPPEEEEDD). Residue Ser-140 is modified to Phosphoserine; by GSK3-alpha and GSK3-beta. Ser-143 is subject to Phosphoserine. A Phosphothreonine; by MAPK modification is found at Thr-144. Glycyl lysine isopeptide (Lys-Gly) (interchain with G-Cter in ubiquitin) cross-links involve residues Lys-175 and Lys-178. The BH3 motif lies at 190–204 (ALETLRRVGDGVQRN). The short motif at 234–253 (VFKDGVTNWGRIVTLISFGA) is the BH1 element. Positions 285 to 300 (DWLVKQRGWDGFVEFF) match the BH2 motif. A helical transmembrane segment spans residues 308–330 (GIRNVLLAFAGVAGVGAGLAYLI).

It belongs to the Bcl-2 family. As to quaternary structure, interacts with HIF3A isoform 2 (via C-terminus domain). Interacts with BAD, BOK, BIK, BAX, BAK1, and TPT1. Interacts with BBC3, BMF and PMAIP1. Interacts with BOP. Interacts with BCL2L11; this interaction may sequester BCL2L11 and prevent its pro-apoptotic activity. Interacts with GIMAP5 and HSPA8/HSC70; the interaction between HSPA8 and MCL1 is impaired in the absence of GIMAP5. Cleaved by CASP3 during apoptosis, yielding a pro-apoptotic C-terminal fragment. In terms of processing, rapidly degraded in the absence of phosphorylation in the PEST region. Post-translationally, phosphorylated on Ser-140, by GSK3, in response to IL3/interleukin-3 withdrawal. Phosphorylation at Ser-140 induces ubiquitination and proteasomal degradation, abrogating the anti-apoptotic activity. Treatment with taxol or okadaic acid induces phosphorylation on additional sites. Ubiquitinated. Ubiquitination is induced by phosphorylation at Ser-140. Deubiquitinated by USP20; leading to increased stability.

The protein resides in the membrane. Its subcellular location is the cytoplasm. The protein localises to the mitochondrion. It is found in the nucleus. It localises to the nucleoplasm. Functionally, involved in the regulation of apoptosis versus cell survival, and in the maintenance of viability but not of proliferation. Mediates its effects by interactions with a number of other regulators of apoptosis. Isoform 2 has antiapoptotic activity. The polypeptide is Induced myeloid leukemia cell differentiation protein Mcl-1 homolog (Mcl1) (Mus musculus (Mouse)).